The primary structure comprises 641 residues: MINNKMKTLSDKYPTKMAVTSEIINLKAILNLPKPTEAFMSDLHGEYDAFQHLIRTGAGNLRQKINELFSGEMTPETMQAFAFLVYYPTERLALKHKALSENELNQWYLTTFKRMIDLLKFVSTKYTRSKVRKAMAPDFVYITEELMYGDVANVDKKRYFQEITATIIELGQADALIIATSHTIQRLVVDQWHIIGDIYDRGPHPDLIVDQLTQLPAVDVQWGNHDILWFGAASGSELCLLNLLRICARYNNLAIIEETYGIALTDLVRFAAQHYQANSAFMPVEDPNQGPLTHAEKLKISQVQQALAIMQFKLELTVIKRHPEFNMDHRLLLSQVDFKRRILHLNGQEYPLKNTCFQLVDPENPEALTAEESQIIADLLAAFTRCQKLRKHLTFLIDHGSMYRIYNQNLLFHGCLPVDAQGHFLTLTLANQNYAGKQLLDFFDQQIRSSFNHPLHQANLSTDLLWYLWTGPLSPLFGKNAMTTFERYFCPDPETHVETKNAYYSLRHDADFIQQLLSEFNLSPETGHILNGHTPVKKGHDPIMANRQMIVIDGGFSKAYHHTTGIGGFTLLYNSYGMQLVTHQPFTTKADAIANMKDIISTRRVIDQVSQRQRVSQTNIGAAIKTEIEQLQTLLTIQPDH.

Belongs to the FBPase class 3 family. Requires Mn(2+) as cofactor.

The enzyme catalyses beta-D-fructose 1,6-bisphosphate + H2O = beta-D-fructose 6-phosphate + phosphate. It participates in carbohydrate biosynthesis; gluconeogenesis. The sequence is that of Fructose-1,6-bisphosphatase class 3 from Latilactobacillus sakei subsp. sakei (strain 23K) (Lactobacillus sakei subsp. sakei).